A 311-amino-acid polypeptide reads, in one-letter code: uncharacterized protein (311 aa).

This is an uncharacterized protein from Mycoplasma genitalium (strain ATCC 33530 / DSM 19775 / NCTC 10195 / G37) (Mycoplasmoides genitalium).